The chain runs to 605 residues: Dynein axonemal intermediate chain 2 (605 aa).

WD repeat units lie at residues 150–203, 208–246, 253–294, 301–347, 355–393, 399–437, and 443–481; these read KTIN…IWDL, KPEL…CWDT, AELS…WWDI, TEVV…SCNR, KIVC…IWSE, SIMW…IWDF, and DPTL…LLEV. A disordered region spans residues 568-605; that stretch reads IKLTPVPQQPSPEEDQVVEEGEEAAGEEGDEEVEEDLA. Residues 579 to 605 are compositionally biased toward acidic residues; sequence PEEDQVVEEGEEAAGEEGDEEVEEDLA.

This sequence belongs to the dynein intermediate chain family. In terms of assembly, consists of at least two heavy chains and a number of intermediate and light chains. Interacts with DNAAF2. Interacts with DNAAF6/PIH1D3. Interacts with HEATR2; probably involved in outer arm dynein assembly. Interacts with CFAP53. In terms of tissue distribution, highly expressed in trachea and testis. Expressed in respiratory ciliated cells (at protein level).

The protein resides in the cytoplasm. It localises to the cytoskeleton. Its subcellular location is the cilium axoneme. It is found in the dynein axonemal particle. Functionally, part of the dynein complex of respiratory cilia. The sequence is that of Dynein axonemal intermediate chain 2 from Homo sapiens (Human).